Reading from the N-terminus, the 286-residue chain is ATP synthase gamma chain (286 aa).

Belongs to the ATPase gamma chain family. As to quaternary structure, F-type ATPases have 2 components, CF(1) - the catalytic core - and CF(0) - the membrane proton channel. CF(1) has five subunits: alpha(3), beta(3), gamma(1), delta(1), epsilon(1). CF(0) has three main subunits: a, b and c.

Its subcellular location is the cell inner membrane. Produces ATP from ADP in the presence of a proton gradient across the membrane. The gamma chain is believed to be important in regulating ATPase activity and the flow of protons through the CF(0) complex. This is ATP synthase gamma chain from Pseudomonas savastanoi pv. phaseolicola (strain 1448A / Race 6) (Pseudomonas syringae pv. phaseolicola (strain 1448A / Race 6)).